Consider the following 231-residue polypeptide: uncharacterized protein (231 aa).

Position 10 to 34 (10 to 34) interacts with NADP(+); the sequence is VVTGAGSGIGEAIATLLHEEGAKVV. Position 140 (serine 140) interacts with substrate. Tyrosine 153 acts as the Proton acceptor in catalysis.

It belongs to the short-chain dehydrogenases/reductases (SDR) family.

This is an uncharacterized protein from Staphylococcus aureus (strain MW2).